The following is a 164-amino-acid chain: FMN reductase (NADH) RutF (164 aa).

It belongs to the non-flavoprotein flavin reductase family. RutF subfamily.

It carries out the reaction FMNH2 + NAD(+) = FMN + NADH + 2 H(+). Functionally, catalyzes the reduction of FMN to FMNH2 which is used to reduce pyrimidine by RutA via the Rut pathway. The protein is FMN reductase (NADH) RutF of Escherichia coli O81 (strain ED1a).